We begin with the raw amino-acid sequence, 87 residues long: MARVTVEDCLENVDNRFELVMLASKRARQLATGGKEPRLPWENDKPTVVALREIAAGLVDYNVIAQDEIVAEEPLFAAFEEDSNEAL.

The protein belongs to the RNA polymerase subunit omega family. In terms of assembly, the RNAP catalytic core consists of 2 alpha, 1 beta, 1 beta' and 1 omega subunit. When a sigma factor is associated with the core the holoenzyme is formed, which can initiate transcription.

The catalysed reaction is RNA(n) + a ribonucleoside 5'-triphosphate = RNA(n+1) + diphosphate. Functionally, promotes RNA polymerase assembly. Latches the N- and C-terminal regions of the beta' subunit thereby facilitating its interaction with the beta and alpha subunits. This Azotobacter vinelandii (strain DJ / ATCC BAA-1303) protein is DNA-directed RNA polymerase subunit omega.